A 296-amino-acid chain; its full sequence is Giardin subunit alpha-2 (296 aa).

Annexin repeat units lie at residues 2–71, 73–143, 153–223, and 226–293; these read PKLS…MDLF, DRHE…MEKW, GSPD…AHFA, and GMHK…TLWR.

The protein belongs to the annexin family. Giardin subunit alpha subfamily.

The protein resides in the cytoplasm. It localises to the cytoskeleton. Its function is as follows. Giardins are involved in parasite attachment to the intestinal mucosa and in the cytoskeletal disassembly and reassembly that marks the transition from infectious trophozoite to transmissible cyst. They may interact with other cytoskeletal proteins such as microtubules in the microribbons or crossbridges, to maintain the integrity of the ventral disk. The protein is Giardin subunit alpha-2 of Giardia intestinalis (Giardia lamblia).